The chain runs to 243 residues: UPF0758 protein Cyan7425_1778 (243 aa).

Residues 112-235 (TIINDPAVAA…FRSLRQTTKL (124 aa)) form the MPN domain. Residues His-184, His-186, and Asp-197 each contribute to the Zn(2+) site. A JAMM motif motif is present at residues 184–197 (HNHPSGNVEPSPED).

This sequence belongs to the UPF0758 family.

The protein is UPF0758 protein Cyan7425_1778 of Cyanothece sp. (strain PCC 7425 / ATCC 29141).